Consider the following 239-residue polypeptide: 1-(5-phosphoribosyl)-5-[(5-phosphoribosylamino)methylideneamino] imidazole-4-carboxamide isomerase (239 aa).

Asp-9 functions as the Proton acceptor in the catalytic mechanism. The active-site Proton donor is the Asp-131.

It belongs to the HisA/HisF family.

It is found in the cytoplasm. The catalysed reaction is 1-(5-phospho-beta-D-ribosyl)-5-[(5-phospho-beta-D-ribosylamino)methylideneamino]imidazole-4-carboxamide = 5-[(5-phospho-1-deoxy-D-ribulos-1-ylimino)methylamino]-1-(5-phospho-beta-D-ribosyl)imidazole-4-carboxamide. It participates in amino-acid biosynthesis; L-histidine biosynthesis; L-histidine from 5-phospho-alpha-D-ribose 1-diphosphate: step 4/9. The protein is 1-(5-phosphoribosyl)-5-[(5-phosphoribosylamino)methylideneamino] imidazole-4-carboxamide isomerase of Bacteroides fragilis (strain YCH46).